The sequence spans 285 residues: Probable endonuclease 4 (285 aa).

Zn(2+)-binding residues include His-69, His-109, Glu-145, Asp-179, His-182, His-216, Asp-229, His-231, and Glu-261.

This sequence belongs to the AP endonuclease 2 family. Requires Zn(2+) as cofactor.

The enzyme catalyses Endonucleolytic cleavage to 5'-phosphooligonucleotide end-products.. In terms of biological role, endonuclease IV plays a role in DNA repair. It cleaves phosphodiester bonds at apurinic or apyrimidinic (AP) sites, generating a 3'-hydroxyl group and a 5'-terminal sugar phosphate. The polypeptide is Probable endonuclease 4 (Salmonella newport (strain SL254)).